The following is a 301-amino-acid chain: Glycine--tRNA ligase alpha subunit (301 aa).

It belongs to the class-II aminoacyl-tRNA synthetase family. As to quaternary structure, tetramer of two alpha and two beta subunits.

The protein resides in the cytoplasm. It carries out the reaction tRNA(Gly) + glycine + ATP = glycyl-tRNA(Gly) + AMP + diphosphate. The chain is Glycine--tRNA ligase alpha subunit from Bordetella avium (strain 197N).